Here is a 453-residue protein sequence, read N- to C-terminus: RuvB-like helicase 1 (453 aa).

71-78 (GGPGTGKT) is a binding site for ATP.

It belongs to the RuvB family. As to quaternary structure, may form heterododecamers with RVB2. Component of the SWR1 chromatin remodeling complex, the INO80 chromatin remodeling complex, and of the R2TP complex.

It is found in the nucleus. The catalysed reaction is ATP + H2O = ADP + phosphate + H(+). Its function is as follows. DNA helicase which participates in several chromatin remodeling complexes, including the SWR1 and the INO80 complexes. The SWR1 complex mediates the ATP-dependent exchange of histone H2A for the H2A variant HZT1 leading to transcriptional regulation of selected genes by chromatin remodeling. The INO80 complex remodels chromatin by shifting nucleosomes and is involved in DNA repair. Also involved in pre-rRNA processing. This Yarrowia lipolytica (strain CLIB 122 / E 150) (Yeast) protein is RuvB-like helicase 1 (RVB1).